Here is a 508-residue protein sequence, read N- to C-terminus: MGLPWYRVHTVVLNDPGRLLSVHIMHTALVAGWAGSMALYELAVFDPSDPVLDPMWRQGMFVIPFMTRLGITNSWGGWSITGGTITNPGIWSYEGVAGAHIVFSGLCFLAAIWHWVYWDLEIFCDERTGKPSLDLPKIFGIHLFLSGVACFGFGAFHVTGLYGPGIWVSDPYGLTGKVQPVNPAWGAEGFDPFVPGGIASHHIAAGTLGILAGLFHLSVRPPQRLYKGLRMGNIETVLSSSIAAVFFAAFVVAGTMWYGSATTPIELFGPTRYQWDQGYFQQEIYRRVGAGLAENLSLSEAWSKIPEKLAFYDYIGNNPAKGGLFRAGSMDNGDGIAVGWLGHPVFRDKEGRELFVRRMPTFFETFPVVLVDGDGIVRADVPFRRAESKYSVEQVGVTVEFYGGELNGVSYSDPATVKKYARRAQLGEIFELDRATLKSDGVFRSSPRGWFTFGHASFALLFFFGHIWHGARTLFRDVFAGIDPDLDAQVEFGAFQKIGDPTTRRQAV.

6 helical membrane-spanning segments follow: residues 21–36 (SVHIMHTALVAGWAGS), 101–115 (IVFSGLCFLAAIWHW), 140–156 (GIHLFLSGVACFGFGAF), 203–218 (IAAGTLGILAGLFHLS), 237–252 (VLSSSIAAVFFAAFVV), and 457–472 (SFALLFFFGHIWHGAR).

Belongs to the PsbB/PsbC family. PsbB subfamily. PSII is composed of 1 copy each of membrane proteins PsbA, PsbB, PsbC, PsbD, PsbE, PsbF, PsbH, PsbI, PsbJ, PsbK, PsbL, PsbM, PsbT, PsbX, PsbY, PsbZ, Psb30/Ycf12, at least 3 peripheral proteins of the oxygen-evolving complex and a large number of cofactors. It forms dimeric complexes. The cofactor is Binds multiple chlorophylls. PSII binds additional chlorophylls, carotenoids and specific lipids..

It is found in the plastid. Its subcellular location is the chloroplast thylakoid membrane. Its function is as follows. One of the components of the core complex of photosystem II (PSII). It binds chlorophyll and helps catalyze the primary light-induced photochemical processes of PSII. PSII is a light-driven water:plastoquinone oxidoreductase, using light energy to abstract electrons from H(2)O, generating O(2) and a proton gradient subsequently used for ATP formation. This is Photosystem II CP47 reaction center protein from Acorus calamus var. americanus (American sweet flag).